Consider the following 166-residue polypeptide: Large ribosomal subunit protein uL10 (166 aa).

The protein belongs to the universal ribosomal protein uL10 family. In terms of assembly, part of the ribosomal stalk of the 50S ribosomal subunit. The N-terminus interacts with L11 and the large rRNA to form the base of the stalk. The C-terminus forms an elongated spine to which L12 dimers bind in a sequential fashion forming a multimeric L10(L12)X complex.

Its function is as follows. Forms part of the ribosomal stalk, playing a central role in the interaction of the ribosome with GTP-bound translation factors. The sequence is that of Large ribosomal subunit protein uL10 from Shewanella woodyi (strain ATCC 51908 / MS32).